The chain runs to 591 residues: MTMMSDLSLDLVEEILCRVPITSLKAVRSSCKLWNVLSKNRILCKTEARNQFLGFTIMNHRLYSMRFNLHGIGLNENSEEFIDPSIKPIGNLLNQVEISKVFYCEGLLLCVTRNHSSKLVVWNPYLGEIRWIKTRNDYHIGVTYALGYDNNKNHMILRFFSEQGYYEIYDMNSSDSWDCFYGIPNKGLKCYQPGASLNGNAYFLTEGREVMEGYDCLLGFDFTTKKFGPLLSLSFSHDFIETGRLSCVKGEKLAVLYQRCYTYEMEVWVTTKIEPNAVSWSKFLAVEMEPLTSLKFNDDSGSFFIDEEKKIVVVFDIDESERNNTAYIIGDYGCLKEVDLDEVVNPQESVEVGDRIYSFSPFVCSCSYVPSLVKFKEDAEHERKDKKRKSKRKRTNKDGYDFILCFDFTTERFGQILPLPFKHSFRDTWTLSSVKEEKLAVAVLYWKNTCVMIEIWMTIKIDPNVESWSKFLRVDRKPCIDLRFDDRNDSFFIDEEKKVVVFFSSDKVKTSTAYVIGDNRYLRTVDLEKAANSQESVEVGERVYCFSPLVCSCSYYVPSLVKINHNAGRKRKEKKTKRKSKDKQMKLSNKV.

Positions 2–49 (TMMSDLSLDLVEEILCRVPITSLKAVRSSCKLWNVLSKNRILCKTEAR) constitute an F-box domain. Over residues 567-581 (AGRKRKEKKTKRKSK) the composition is skewed to basic residues. Residues 567 to 591 (AGRKRKEKKTKRKSKDKQMKLSNKV) form a disordered region.

This is Putative F-box protein At1g32140 from Arabidopsis thaliana (Mouse-ear cress).